We begin with the raw amino-acid sequence, 157 residues long: Small ribosomal subunit protein uS7 (157 aa).

It belongs to the universal ribosomal protein uS7 family. In terms of assembly, part of the 30S ribosomal subunit. Contacts proteins S9 and S11.

Functionally, one of the primary rRNA binding proteins, it binds directly to 16S rRNA where it nucleates assembly of the head domain of the 30S subunit. Is located at the subunit interface close to the decoding center, probably blocks exit of the E-site tRNA. In Borreliella afzelii (strain PKo) (Borrelia afzelii), this protein is Small ribosomal subunit protein uS7.